Consider the following 132-residue polypeptide: MSKIDKPLDSWREELTEEQFHICRLGGTERAFSGEYHATKTPGIYHCTCCGTALFDSDAKYDSGSGWPSYFQPVDAEAVRELDDFSHGMHRIEVRCGRCDAHLGHVFPDGPRPTGLRYCINSASLKLVPRES.

The region spanning 8–130 is the MsrB domain; the sequence is LDSWREELTE…NSASLKLVPR (123 aa). Residues C47, C50, C96, and C99 each contribute to the Zn(2+) site. C119 acts as the Nucleophile in catalysis.

Belongs to the MsrB Met sulfoxide reductase family. Requires Zn(2+) as cofactor.

It carries out the reaction L-methionyl-[protein] + [thioredoxin]-disulfide + H2O = L-methionyl-(R)-S-oxide-[protein] + [thioredoxin]-dithiol. This is Peptide methionine sulfoxide reductase MsrB from Pseudomonas aeruginosa (strain UCBPP-PA14).